We begin with the raw amino-acid sequence, 176 residues long: Prepronociceptin (176 aa).

The N-terminal stretch at 1-19 is a signal peptide; the sequence is MKILFCDLLLLSLFSSVSS. 2 consecutive propeptides follow at residues 20-95 and 169-176; these read SCQK…MQHL and TLHQNGNA.

This sequence belongs to the opioid neuropeptide precursor family. Specific enzymatic cleavages at paired basic residues probably yield other active peptides besides nociceptin. In terms of processing, the N-terminal domain contains 6 conserved cysteines thought to be involved in disulfide bonding and/or processing.

It localises to the secreted. Its function is as follows. Ligand of the opioid receptor-like receptor OPRL1. It may act as a transmitter in the brain by modulating nociceptive and locomotor behavior. May be involved in neuronal differentiation and development. Functionally, blocks nociceptin action in pain transmission by inhibiting nociceptin-induced hyperalgesia and allodynia. In terms of biological role, has potent analgesic activity. This chain is Prepronociceptin (PNOC), found in Bos taurus (Bovine).